Consider the following 142-residue polypeptide: Large ribosomal subunit protein uL13 (142 aa).

It belongs to the universal ribosomal protein uL13 family. Part of the 50S ribosomal subunit.

Its function is as follows. This protein is one of the early assembly proteins of the 50S ribosomal subunit, although it is not seen to bind rRNA by itself. It is important during the early stages of 50S assembly. The chain is Large ribosomal subunit protein uL13 from Pseudomonas entomophila (strain L48).